The sequence spans 268 residues: Malonyl-[acyl-carrier protein] O-methyltransferase (268 aa).

The protein belongs to the methyltransferase superfamily.

It catalyses the reaction malonyl-[ACP] + S-adenosyl-L-methionine = malonyl-[ACP] methyl ester + S-adenosyl-L-homocysteine. Its pathway is cofactor biosynthesis; biotin biosynthesis. Converts the free carboxyl group of a malonyl-thioester to its methyl ester by transfer of a methyl group from S-adenosyl-L-methionine (SAM). It allows to synthesize pimeloyl-ACP via the fatty acid synthetic pathway. The polypeptide is Malonyl-[acyl-carrier protein] O-methyltransferase (Prosthecochloris aestuarii (strain DSM 271 / SK 413)).